The primary structure comprises 105 residues: Gastrin/cholecystokinin-like peptide (105 aa).

An N-terminal signal peptide occupies residues 1-20; the sequence is MKTKVFLGLILSAAVTACLC. The propeptide occupies 21–38; that stretch reads RPAAKAPGGSHRPTSSLA. Residues 24 to 51 form a disordered region; that stretch reads AKAPGGSHRPTSSLARRDWPEPPSQEQQ. A Sulfotyrosine modification is found at Tyr-87. Phe-93 carries the phenylalanine amide modification. A propeptide spanning residues 97-105 is cleaved from the precursor; it reads STEDAADAA.

The protein belongs to the gastrin/cholecystokinin family.

Its subcellular location is the secreted. Its function is as follows. Potent stimulus of gastric acid, but not of pancreatic secretion. The chain is Gastrin/cholecystokinin-like peptide from Gallus gallus (Chicken).